We begin with the raw amino-acid sequence, 271 residues long: Eukaryotic translation initiation factor 3 subunit G (271 aa).

Disordered stretches follow at residues 1 to 26 (MSTT…TNPD), 63 to 119 (AQRK…AQKL), and 147 to 187 (TTSS…RDDS). The residue at position 77 (S77) is a Phosphoserine. The RRM domain maps to 188 to 267 (TTLKVSQLNS…LILHLEWSKK (80 aa)).

This sequence belongs to the eIF-3 subunit G family. Component of the eukaryotic translation initiation factor 3 (eIF-3) complex.

Its subcellular location is the cytoplasm. RNA-binding component of the eukaryotic translation initiation factor 3 (eIF-3) complex, which is involved in protein synthesis of a specialized repertoire of mRNAs and, together with other initiation factors, stimulates binding of mRNA and methionyl-tRNAi to the 40S ribosome. The eIF-3 complex specifically targets and initiates translation of a subset of mRNAs involved in cell proliferation. This subunit can bind 18S rRNA. This Scheffersomyces stipitis (strain ATCC 58785 / CBS 6054 / NBRC 10063 / NRRL Y-11545) (Yeast) protein is Eukaryotic translation initiation factor 3 subunit G.